The sequence spans 67 residues: Large ribosomal subunit protein uL29 (67 aa).

It belongs to the universal ribosomal protein uL29 family.

In Solibacter usitatus (strain Ellin6076), this protein is Large ribosomal subunit protein uL29.